The primary structure comprises 181 residues: Ribulose bisphosphate carboxylase small subunit 2B, chloroplastic (181 aa).

The N-terminal 54 residues, 1 to 54, are a transit peptide targeting the chloroplast; sequence MASSMFSSTAVVTSPAQATMVAPFTGLKSSASFPVTRKANNDITSITSNGGRVS.

It belongs to the RuBisCO small chain family. Heterohexadecamer of 8 large and 8 small subunits.

It is found in the plastid. Its subcellular location is the chloroplast. In terms of biological role, ruBisCO catalyzes two reactions: the carboxylation of D-ribulose 1,5-bisphosphate, the primary event in carbon dioxide fixation, as well as the oxidative fragmentation of the pentose substrate. Both reactions occur simultaneously and in competition at the same active site. Although the small subunit is not catalytic it is essential for maximal activity. The protein is Ribulose bisphosphate carboxylase small subunit 2B, chloroplastic (RBCS-2B) of Arabidopsis thaliana (Mouse-ear cress).